The chain runs to 486 residues: Aspartyl/glutamyl-tRNA(Asn/Gln) amidotransferase subunit B (486 aa).

Belongs to the GatB/GatE family. GatB subfamily. Heterotrimer of A, B and C subunits.

The enzyme catalyses L-glutamyl-tRNA(Gln) + L-glutamine + ATP + H2O = L-glutaminyl-tRNA(Gln) + L-glutamate + ADP + phosphate + H(+). The catalysed reaction is L-aspartyl-tRNA(Asn) + L-glutamine + ATP + H2O = L-asparaginyl-tRNA(Asn) + L-glutamate + ADP + phosphate + 2 H(+). Its function is as follows. Allows the formation of correctly charged Asn-tRNA(Asn) or Gln-tRNA(Gln) through the transamidation of misacylated Asp-tRNA(Asn) or Glu-tRNA(Gln) in organisms which lack either or both of asparaginyl-tRNA or glutaminyl-tRNA synthetases. The reaction takes place in the presence of glutamine and ATP through an activated phospho-Asp-tRNA(Asn) or phospho-Glu-tRNA(Gln). The protein is Aspartyl/glutamyl-tRNA(Asn/Gln) amidotransferase subunit B of Leptospira borgpetersenii serovar Hardjo-bovis (strain L550).